The primary structure comprises 132 residues: Small ribosomal subunit protein uS8 (132 aa).

Belongs to the universal ribosomal protein uS8 family. Part of the 30S ribosomal subunit. Contacts proteins S5 and S12.

Its function is as follows. One of the primary rRNA binding proteins, it binds directly to 16S rRNA central domain where it helps coordinate assembly of the platform of the 30S subunit. The protein is Small ribosomal subunit protein uS8 of Rhodospirillum centenum (strain ATCC 51521 / SW).